The chain runs to 363 residues: Mitogen-activated protein kinase 13 (363 aa).

The region spanning 33-319 is the Protein kinase domain; that stretch reads IPPIEPIGRG…VDEALKQPYL (287 aa). Residues 39–47 and lysine 62 each bind ATP; that span reads IGRGAYGIV. The active-site Proton acceptor is the aspartate 159. The residue at position 191 (threonine 191) is a Phosphothreonine. Residues 191–193 carry the TXY motif; that stretch reads TEY. The residue at position 193 (tyrosine 193) is a Phosphotyrosine. Threonine 196 is subject to Phosphothreonine.

This sequence belongs to the protein kinase superfamily. CMGC Ser/Thr protein kinase family. MAP kinase subfamily. In terms of assembly, interacts with MKK6. Dually phosphorylated on Thr-191 and Tyr-193, which activates the enzyme. As to expression, expressed in roots, stems and flower buds.

It catalyses the reaction L-seryl-[protein] + ATP = O-phospho-L-seryl-[protein] + ADP + H(+). It carries out the reaction L-threonyl-[protein] + ATP = O-phospho-L-threonyl-[protein] + ADP + H(+). Activated by threonine and tyrosine phosphorylation. Activated by the MAP kinase kinase MKK6 in vitro. MKK6-MPK13 module positively regulates lateral root formation. This Arabidopsis thaliana (Mouse-ear cress) protein is Mitogen-activated protein kinase 13 (MPK13).